Consider the following 369-residue polypeptide: Phosphoribosyl pyrophosphate synthase-associated protein 2 (369 aa).

An N-acetylmethionine modification is found at M1. T5 carries the post-translational modification Phosphothreonine. Residues S219, S227, and S233 each carry the phosphoserine modification.

The protein belongs to the ribose-phosphate pyrophosphokinase family. Binds to PRPS1 and PRPS2.

In terms of biological role, seems to play a negative regulatory role in 5-phosphoribose 1-diphosphate synthesis. The protein is Phosphoribosyl pyrophosphate synthase-associated protein 2 (PRPSAP2) of Pongo abelii (Sumatran orangutan).